A 73-amino-acid polypeptide reads, in one-letter code: Translation initiation factor IF-1 (73 aa).

The 72-residue stretch at 1-72 (MAKEDVIEVE…TKGRITYRFI (72 aa)) folds into the S1-like domain.

Belongs to the IF-1 family. As to quaternary structure, component of the 30S ribosomal translation pre-initiation complex which assembles on the 30S ribosome in the order IF-2 and IF-3, IF-1 and N-formylmethionyl-tRNA(fMet); mRNA recruitment can occur at any time during PIC assembly.

It is found in the cytoplasm. Its function is as follows. One of the essential components for the initiation of protein synthesis. Stabilizes the binding of IF-2 and IF-3 on the 30S subunit to which N-formylmethionyl-tRNA(fMet) subsequently binds. Helps modulate mRNA selection, yielding the 30S pre-initiation complex (PIC). Upon addition of the 50S ribosomal subunit IF-1, IF-2 and IF-3 are released leaving the mature 70S translation initiation complex. The polypeptide is Translation initiation factor IF-1 (Lactobacillus johnsonii (strain CNCM I-12250 / La1 / NCC 533)).